Reading from the N-terminus, the 460-residue chain is 3-isopropylmalate dehydratase large subunit (460 aa).

The [4Fe-4S] cluster site is built by C338, C398, and C401.

This sequence belongs to the aconitase/IPM isomerase family. LeuC type 1 subfamily. Heterodimer of LeuC and LeuD. The cofactor is [4Fe-4S] cluster.

It catalyses the reaction (2R,3S)-3-isopropylmalate = (2S)-2-isopropylmalate. The protein operates within amino-acid biosynthesis; L-leucine biosynthesis; L-leucine from 3-methyl-2-oxobutanoate: step 2/4. Functionally, catalyzes the isomerization between 2-isopropylmalate and 3-isopropylmalate, via the formation of 2-isopropylmaleate. This is 3-isopropylmalate dehydratase large subunit from Streptococcus thermophilus (strain ATCC BAA-250 / LMG 18311).